A 173-amino-acid chain; its full sequence is Large ribosomal subunit protein uL10 (173 aa).

This sequence belongs to the universal ribosomal protein uL10 family. As to quaternary structure, part of the ribosomal stalk of the 50S ribosomal subunit. The N-terminus interacts with L11 and the large rRNA to form the base of the stalk. The C-terminus forms an elongated spine to which L12 dimers bind in a sequential fashion forming a multimeric L10(L12)X complex.

Its function is as follows. Forms part of the ribosomal stalk, playing a central role in the interaction of the ribosome with GTP-bound translation factors. This chain is Large ribosomal subunit protein uL10, found in Bifidobacterium adolescentis (strain ATCC 15703 / DSM 20083 / NCTC 11814 / E194a).